The following is a 254-amino-acid chain: 5-oxoprolinase subunit A (254 aa).

This sequence belongs to the LamB/PxpA family. As to quaternary structure, forms a complex composed of PxpA, PxpB and PxpC.

The catalysed reaction is 5-oxo-L-proline + ATP + 2 H2O = L-glutamate + ADP + phosphate + H(+). Catalyzes the cleavage of 5-oxoproline to form L-glutamate coupled to the hydrolysis of ATP to ADP and inorganic phosphate. This Rhodopseudomonas palustris (strain ATCC BAA-98 / CGA009) protein is 5-oxoprolinase subunit A.